Consider the following 591-residue polypeptide: Probable sulfoacetaldehyde acetyltransferase (591 aa).

A disordered region spans residues 359-383 (MDHEDDDPGTEWNVGARQREPDRMS).

This sequence belongs to the TPP enzyme family. It depends on Mg(2+) as a cofactor. Requires thiamine diphosphate as cofactor.

It is found in the cytoplasm. It carries out the reaction acetyl phosphate + sulfite + H(+) = sulfoacetaldehyde + phosphate. The protein operates within organosulfur degradation; taurine degradation via aerobic pathway; acetyl phosphate and sulfite from taurine: step 2/2. The chain is Probable sulfoacetaldehyde acetyltransferase (xsc) from Rhizobium meliloti (strain 1021) (Ensifer meliloti).